Reading from the N-terminus, the 148-residue chain is Large ribosomal subunit protein bL9 (148 aa).

This sequence belongs to the bacterial ribosomal protein bL9 family.

Functionally, binds to the 23S rRNA. This chain is Large ribosomal subunit protein bL9, found in Staphylococcus haemolyticus (strain JCSC1435).